The primary structure comprises 226 residues: Large ribosomal subunit protein uL1 (226 aa).

This sequence belongs to the universal ribosomal protein uL1 family. Part of the 50S ribosomal subunit.

In terms of biological role, binds directly to 23S rRNA. Probably involved in E site tRNA release. Functionally, protein L1 is also a translational repressor protein, it controls the translation of its operon by binding to its mRNA. The polypeptide is Large ribosomal subunit protein uL1 (Korarchaeum cryptofilum (strain OPF8)).